The primary structure comprises 444 residues: Phosphoglucosamine mutase (444 aa).

Ser102 acts as the Phosphoserine intermediate in catalysis. The Mg(2+) site is built by Ser102, Asp241, Asp243, and Asp245. Ser102 carries the phosphoserine modification.

It belongs to the phosphohexose mutase family. It depends on Mg(2+) as a cofactor. Activated by phosphorylation.

The catalysed reaction is alpha-D-glucosamine 1-phosphate = D-glucosamine 6-phosphate. In terms of biological role, catalyzes the conversion of glucosamine-6-phosphate to glucosamine-1-phosphate. The polypeptide is Phosphoglucosamine mutase (Mannheimia succiniciproducens (strain KCTC 0769BP / MBEL55E)).